The following is a 175-amino-acid chain: Major MR/P fimbria protein (175 aa).

Residues 1–23 form the signal peptide; that stretch reads MKLNKLALVLGLGLSVVAGSALA. Cys42 and Cys81 are disulfide-bonded.

The protein belongs to the fimbrial protein family.

The protein resides in the fimbrium. Major structural component of mannose-resistant/proteus-like fimbriae of P.mirabilis. This is Major MR/P fimbria protein (mrpA) from Proteus mirabilis (strain HI4320).